The primary structure comprises 277 residues: Caspase-3 (277 aa).

Residue M1 is modified to N-acetylmethionine. Propeptides lie at residues 1 to 9 and 10 to 28; these read MENSENSVD and AKSIKNSETKIFHGSKSMD. K11 carries the N6-acetyllysine modification. S26 is modified (phosphoserine). Catalysis depends on residues H121 and C163. C163 is subject to S-nitrosocysteine; in inhibited form.

Belongs to the peptidase C14A family. As to quaternary structure, heterotetramer that consists of two anti-parallel arranged heterodimers, each one formed by a 17 kDa (p17) and a 12 kDa (p12) subunit. Interacts with BIRC6/bruce. Post-translationally, cleavage by granzyme B, caspase-6, caspase-8 and caspase-10 generates the two active subunits. Additional processing of the propeptides is likely due to the autocatalytic activity of the activated protease. Active heterodimers between the small subunit of caspase-7 protease and the large subunit of caspase-3 also occur and vice versa. In terms of processing, S-nitrosylated on its catalytic site cysteine in unstimulated cell lines and denitrosylated upon activation of the Fas apoptotic pathway, associated with an increase in intracellular caspase activity. Fas therefore activates caspase-3 not only by inducing the cleavage of the caspase zymogen to its active subunits, but also by stimulating the denitrosylation of its active site thiol. Ubiquitinated by BIRC6; this activity is inhibited by DIABLO/SMAC.

It localises to the cytoplasm. The catalysed reaction is Strict requirement for an Asp residue at positions P1 and P4. It has a preferred cleavage sequence of Asp-Xaa-Xaa-Asp-|- with a hydrophobic amino-acid residue at P2 and a hydrophilic amino-acid residue at P3, although Val or Ala are also accepted at this position.. Inhibited by BIRC6; following inhibition of BIRC6-caspase binding by DIABLO/SMAC, BIRC6 is subjected to caspase cleavage, leading to an increase in active caspases. Functionally, involved in the activation cascade of caspases responsible for apoptosis execution. At the onset of apoptosis, it proteolytically cleaves poly(ADP-ribose) polymerase PARP1 at a '216-Asp-|-Gly-217' bond. Cleaves and activates sterol regulatory element binding proteins (SREBPs) between the basic helix-loop-helix leucine zipper domain and the membrane attachment domain. Cleaves and activates caspase-6, -7 and -9 (CASP6, CASP7 and CASP9, respectively). Cleaves and inactivates interleukin-18 (IL18). Triggers cell adhesion in sympathetic neurons through RET cleavage. Cleaves IL-1 beta between an Asp and an Ala, releasing the mature cytokine which is involved in a variety of inflammatory processes. Cleaves and inhibits serine/threonine-protein kinase AKT1 in response to oxidative stress. Acts as an inhibitor of type I interferon production during virus-induced apoptosis by mediating cleavage of antiviral proteins CGAS, IRF3 and MAVS, thereby preventing cytokine overproduction. Also involved in pyroptosis by mediating cleavage and activation of gasdermin-E (GSDME). Cleaves XRCC4 and phospholipid scramblase proteins XKR4, XKR8 and XKR9, leading to promote phosphatidylserine exposure on apoptotic cell surface. Cleaves BIRC6 following inhibition of BIRC6-caspase binding by DIABLO/SMAC. This is Caspase-3 (CASP3) from Felis catus (Cat).